The following is a 254-amino-acid chain: GTP cyclohydrolase III (254 aa).

This sequence belongs to the archaeal-type GTP cyclohydrolase family.

The catalysed reaction is GTP + 3 H2O = 2-amino-5-formylamino-6-(5-phospho-D-ribosylamino)pyrimidin-4(3H)-one + 2 phosphate + 2 H(+). Functionally, catalyzes the formation of 2-amino-5-formylamino-6-ribofuranosylamino-4(3H)-pyrimidinone ribonucleotide monophosphate and inorganic phosphate from GTP. Also has an independent pyrophosphate phosphohydrolase activity. The chain is GTP cyclohydrolase III from Methanobrevibacter smithii (strain ATCC 35061 / DSM 861 / OCM 144 / PS).